Reading from the N-terminus, the 50-residue chain is AEDSRGTQLHRALRKATKLSESTRCKRKGSSCRRTSYDCCTGSCRNGKCG.

A signal peptide is located at residue A1. The propeptide occupies E2 to R24. Disulfide bonds link C25–C40, C32–C44, and C39–C49. C49 is modified (cysteine amide).

This sequence belongs to the conotoxin O1 superfamily. Expressed by the venom duct.

It is found in the secreted. In terms of biological role, omega-conotoxins act at presynaptic membranes, they bind and block voltage-gated calcium channels (Cav). This toxin selectively and potently inhibits depolarization-activated rat Cav2.2/CACNA1B currents (IC(50)=89 nM), when coexpressed with alpha-2/delta-1 (CACNA2D1) and beta-3 (CACNB3) subunits. In vivo, is lethal to fish and displays potent analgesic activity in mice pain models of hot plate and acetic acid writhing but has fewer side effects on mouse motor function and lower toxicity in goldfish. Shows higher or similar analgesic activity in the pain models mentioned above compared to MVIIA, and lower side effects. In addition, it blocks Cav2.2/CACNA1B more rapidly than MVIIA and also dissociates more rapidly. This is Omega-conotoxin Bu8 from Conus bullatus (Bubble cone).